The primary structure comprises 309 residues: Protein FdhE homolog (309 aa).

Belongs to the FdhE family.

It is found in the cytoplasm. Necessary for formate dehydrogenase activity. The polypeptide is Protein FdhE homolog (Yersinia pestis bv. Antiqua (strain Antiqua)).